A 168-amino-acid chain; its full sequence is ATP synthase subunit b (168 aa).

Residues alanine 9–leucine 29 form a helical membrane-spanning segment.

This sequence belongs to the ATPase B chain family. In terms of assembly, F-type ATPases have 2 components, F(1) - the catalytic core - and F(0) - the membrane proton channel. F(1) has five subunits: alpha(3), beta(3), gamma(1), delta(1), epsilon(1). F(0) has three main subunits: a(1), b(2) and c(10-14). The alpha and beta chains form an alternating ring which encloses part of the gamma chain. F(1) is attached to F(0) by a central stalk formed by the gamma and epsilon chains, while a peripheral stalk is formed by the delta and b chains.

It localises to the cell membrane. Its function is as follows. F(1)F(0) ATP synthase produces ATP from ADP in the presence of a proton or sodium gradient. F-type ATPases consist of two structural domains, F(1) containing the extramembraneous catalytic core and F(0) containing the membrane proton channel, linked together by a central stalk and a peripheral stalk. During catalysis, ATP synthesis in the catalytic domain of F(1) is coupled via a rotary mechanism of the central stalk subunits to proton translocation. Component of the F(0) channel, it forms part of the peripheral stalk, linking F(1) to F(0). This Bacillus thuringiensis (strain Al Hakam) protein is ATP synthase subunit b.